The primary structure comprises 70 residues: Gas vesicle protein A (70 aa).

The protein belongs to the gas vesicle GvpA family. In terms of assembly, the gas vesicle shell is 2 nm thick and consists of a single layer of this protein. It forms helical ribs nearly perpendicular to the long axis of the vesicle.

Its subcellular location is the gas vesicle shell. Its function is as follows. Gas vesicles are hollow, gas filled proteinaceous nanostructures found in some microorganisms. During planktonic growth they allow positioning of the organism at a favorable depth for light or nutrient acquisition. GvpA forms the protein shell. This Bradyrhizobium sp. (strain ORS 278) protein is Gas vesicle protein A.